The chain runs to 53 residues: Large ribosomal subunit protein eL40 (53 aa).

Belongs to the eukaryotic ribosomal protein eL40 family.

The sequence is that of Large ribosomal subunit protein eL40 from Pyrobaculum aerophilum (strain ATCC 51768 / DSM 7523 / JCM 9630 / CIP 104966 / NBRC 100827 / IM2).